The following is a 263-amino-acid chain: 3-methyl-2-oxobutanoate hydroxymethyltransferase (263 aa).

Residues Asp45 and Asp84 each contribute to the Mg(2+) site. 3-methyl-2-oxobutanoate is bound by residues 45 to 46 (DS), Asp84, and Lys112. Glu114 contributes to the Mg(2+) binding site. Catalysis depends on Glu181, which acts as the Proton acceptor.

Belongs to the PanB family. In terms of assembly, homodecamer; pentamer of dimers. Requires Mg(2+) as cofactor.

The protein localises to the cytoplasm. It carries out the reaction 3-methyl-2-oxobutanoate + (6R)-5,10-methylene-5,6,7,8-tetrahydrofolate + H2O = 2-dehydropantoate + (6S)-5,6,7,8-tetrahydrofolate. The protein operates within cofactor biosynthesis; (R)-pantothenate biosynthesis; (R)-pantoate from 3-methyl-2-oxobutanoate: step 1/2. In terms of biological role, catalyzes the reversible reaction in which hydroxymethyl group from 5,10-methylenetetrahydrofolate is transferred onto alpha-ketoisovalerate to form ketopantoate. The polypeptide is 3-methyl-2-oxobutanoate hydroxymethyltransferase (Buchnera aphidicola subsp. Acyrthosiphon pisum (strain APS) (Acyrthosiphon pisum symbiotic bacterium)).